A 396-amino-acid chain; its full sequence is ATP-dependent RNA helicase eIF4A (396 aa).

A Q motif motif is present at residues aspartate 23–glutamine 51. The Helicase ATP-binding domain maps to isoleucine 54 to isoleucine 224. Alanine 67–threonine 74 contacts ATP. The DEAD box motif lies at aspartate 172–aspartate 175. Residues glycine 235–isoleucine 396 enclose the Helicase C-terminal domain.

This sequence belongs to the DEAD box helicase family. eIF4A subfamily. In terms of assembly, component of the eIF4F complex, which composition varies with external and internal environmental conditions. It is composed of at least eIF4A, eIF4E and eIF4G.

It is found in the cytoplasm. It carries out the reaction ATP + H2O = ADP + phosphate + H(+). ATP-dependent RNA helicase which is a subunit of the eIF4F complex involved in cap recognition and is required for mRNA binding to ribosome. In the current model of translation initiation, eIF4A unwinds RNA secondary structures in the 5'-UTR of mRNAs which is necessary to allow efficient binding of the small ribosomal subunit, and subsequent scanning for the initiator codon. This is ATP-dependent RNA helicase eIF4A (TIF1) from Pyricularia oryzae (strain 70-15 / ATCC MYA-4617 / FGSC 8958) (Rice blast fungus).